The following is a 1091-amino-acid chain: Neural cell adhesion molecule 1 (1091 aa).

Residues 1 to 19 (MLPAAALPWTLFFLGAAAS) form the signal peptide. Ig-like C2-type domains lie at 20–113 (LQVD…VNVK), 116–205 (QKLM…KDIQ), 212–301 (PSVR…ATIH), 308–403 (PKIT…LEVQ), and 406–495 (PKLQ…FILV). The Extracellular segment spans residues 20-711 (LQVDIVPSQG…STSPTSGLGT (692 aa)). 2 disulfides stabilise this stretch: Cys41/Cys96 and Cys139/Cys189. Residues 152-156 (KHKGR) and 161-165 (KKDVR) contribute to the heparin site. The N-linked (GlcNAc...) asparagine glycan is linked to Asn222. Cys235 and Cys287 are disulfide-bonded. Asn315, Asn347, Asn423, Asn449, and Asn478 each carry an N-linked (GlcNAc...) asparagine glycan. An intrachain disulfide couples Cys329 to Cys385. A disulfide bridge connects residues Cys426 and Cys479. 2 consecutive Fibronectin type-III domains span residues 499 to 598 (TPSS…TQPV) and 600 to 696 (EPSA…SAQP). A helical transmembrane segment spans residues 712 to 729 (AAIVGILIVIFVLLLVAV). The Cytoplasmic segment spans residues 730–1091 (DVTCYFLNKC…ATEIRHLQQK (362 aa)). Disordered stretches follow at residues 756-809 (GAKG…TEPE), 840-916 (ATAQ…NNLS), 937-1023 (ETSK…GTFK), and 1041-1091 (TPAS…LQQK). A compositionally biased stretch (basic and acidic residues) spans 758–799 (KGKDMEEGKAAFSKDESKEPIVEVRTEEERTPNHDGGKHTEP). The segment covering 845–856 (SPTSETTTLTSS) has biased composition (low complexity). 2 stretches are compositionally biased toward polar residues: residues 904-916 (DTPS…NNLS) and 980-1012 (QPST…PSQN). Basic and acidic residues-rich tracts occupy residues 1013 to 1023 (EDFKMDEGTFK) and 1068 to 1091 (KTEK…LQQK).

Polysialylated by ST8SIA2 and ST8SIA4. Polysialylation modulates cell interactions by confering both attractive and repulsive properties that are highly regulated by ST8SIA2 and ST8SIA4. Polysialylation is formed on a-2,3-linked sialic acid of core glycans.

Its subcellular location is the cell membrane. Its function is as follows. This protein is a cell adhesion molecule involved in neuron-neuron adhesion, neurite fasciculation, outgrowth of neurites, etc. The polypeptide is Neural cell adhesion molecule 1 (Gallus gallus (Chicken)).